The primary structure comprises 755 residues: Cartilage oligomeric matrix protein (755 aa).

The first 19 residues, 1-19 (MSPTACVLVLALAALRATG), serve as a signal peptide directing secretion. Residues 21 to 84 (GQIPLGGDLA…PARTPGLSVR (64 aa)) form a COMP N-terminal region. An EGF-like 1 domain is found at 85–124 (PVALCAPGSCFPGVVCTETATGARCGPCPPGYTGNGSHCT). Cystine bridges form between Cys-89/Cys-100, Cys-94/Cys-109, Cys-112/Cys-123, Cys-129/Cys-140, Cys-134/Cys-149, Cys-152/Cys-176, Cys-182/Cys-195, Cys-189/Cys-204, Cys-207/Cys-219, Cys-227/Cys-241, Cys-235/Cys-251, Cys-253/Cys-264, Cys-280/Cys-285, Cys-290/Cys-310, Cys-326/Cys-346, Cys-349/Cys-369, Cys-385/Cys-405, Cys-408/Cys-428, Cys-446/Cys-466, Cys-482/Cys-502, and Cys-518/Cys-739. Asn-119 carries N-linked (GlcNAc...) asparagine glycosylation. Residues 125 to 177 (DVNECNAHPCFPRVRCINTSPGFHCEACPPGFSGPTHEGVGLTFAKTNKQVCT) enclose the EGF-like 2; calcium-binding domain. One can recognise an EGF-like 3; calcium-binding domain in the interval 178-220 (DINECETGQHNCVPNSVCVNTRGSFQCGPCQPGFVGDQRSGCQ). The region spanning 223–265 (GQHFCPDGSPSPCHEKADCILERDGSRSCVCAVGWAGNGLLCG) is the EGF-like 4 domain. TSP type-3 repeat units follow at residues 266-298 (RDTD…NSGQ), 299-334 (EDVD…NPDQ), 335-357 (RNSD…NDDQ), 358-393 (KDTD…NFDQ), 394-416 (SDSD…NPDQ), 417-454 (RDVD…NSAQ), 455-490 (QDSD…NPGQ), and 491-526 (EDND…EVTL). Residues 295–501 (NSGQEDVDRD…DNDRDGVGDA (207 aa)) form a disordered region. Basic and acidic residues-rich tracts occupy residues 332–344 (PDQR…KWGD) and 350–365 (RSQK…RDGQ). The residue at position 394 (Ser-394) is a Phosphoserine. Composition is skewed to basic and acidic residues over residues 412–424 (DNPD…HDFV) and 456–465 (DSDHDGKGDA). The mediates cell survival and induction of the IAP family of survival proteins stretch occupies residues 525-755 (TLTDFRAFQT…DYERHRLRRA (231 aa)). The TSP C-terminal domain occupies 530 to 744 (RAFQTVVLDP…LRYRCNDTIP (215 aa)). The N-linked (GlcNAc...) asparagine glycan is linked to Asn-740.

Belongs to the thrombospondin family. Pentamer; disulfide-linked. Exists in a more compact conformation in the presence of calcium and shows a more extended conformation in the absence of calcium. Interacts with ITGB3, ITGA5 and FN1. Binding to FN1 requires the presence of divalent cations (Ca(2+), Mg(2+) or Mn(2+)). The greatest amount of binding is seen in the presence of Mn(2+). Interacts with MATN1, MATN3, MATN4 and ACAN. Binds heparin, heparan sulfate and chondroitin sulfate. EDTA dimishes significantly its binding to ACAN and abolishes its binding to MATN3, MATN4 and chondroitin sulfate. Interacts with collagen I, II and IX, and interaction with these collagens is dependent on the presence of zinc ions. Interacts with ADAMTS12. Interacts with ITGA7. Ca(2+) serves as cofactor. Proteolytically cleaved by metalloproteases ADAMTS4 and ADAMTS1 with ADAMTS4 showing more potent activity.

The protein resides in the secreted. It localises to the extracellular space. It is found in the extracellular matrix. Plays a role in the structural integrity of cartilage via its interaction with other extracellular matrix proteins such as the collagens and fibronectin. Can mediate the interaction of chondrocytes with the cartilage extracellular matrix through interaction with cell surface integrin receptors. Could play a role in the pathogenesis of osteoarthritis. Potent suppressor of apoptosis in both primary chondrocytes and transformed cells. Suppresses apoptosis by blocking the activation of caspase-3 and by inducing the IAP family of survival proteins (BIRC3, BIRC2, BIRC5 and XIAP). Essential for maintaining a vascular smooth muscle cells (VSMCs) contractile/differentiated phenotype under physiological and pathological stimuli. Maintains this phenotype of VSMCs by interacting with ITGA7. This Rattus norvegicus (Rat) protein is Cartilage oligomeric matrix protein.